The primary structure comprises 495 residues: D-hydantoinase/dihydropyrimidinase (495 aa).

Residues His59, His61, and Lys150 each coordinate Zn(2+). Position 150 is an N6-carboxylysine (Lys150). Tyr155 contacts substrate. His183 and His239 together coordinate Zn(2+). A substrate-binding site is contributed by Ser289. Asp316 is a Zn(2+) binding site. Residue Asn337 coordinates substrate.

The protein belongs to the metallo-dependent hydrolases superfamily. Hydantoinase/dihydropyrimidinase family. In terms of assembly, homotetramer. It depends on Zn(2+) as a cofactor. Carboxylation allows a single lysine to coordinate two zinc ions.

It carries out the reaction 5,6-dihydrouracil + H2O = 3-(carbamoylamino)propanoate + H(+). In terms of biological role, catalyzes the hydrolysis of dihydropyrimidines and of the structurally related DL-5-mono-substituted hydantoins, to produce N-carbamoyl-D-amino acids. The chain is D-hydantoinase/dihydropyrimidinase from Pseudomonas putida (Arthrobacter siderocapsulatus).